A 289-amino-acid chain; its full sequence is uncharacterized protein (289 aa).

The next 9 membrane-spanning stretches (helical) occupy residues 4–24 (NLLA…GTVV), 44–64 (LNAL…LAYF), 68–88 (VALG…SLMF), 106–126 (IFWA…GRPL), 138–158 (IPVL…AEYV), 166–186 (ILGL…KAAV), 196–216 (GLIL…GTIV), 230–250 (LPAM…LVLG), and 258–278 (WEWI…IALS).

It localises to the cell membrane. This is an uncharacterized protein from Corynebacterium glutamicum (strain ATCC 13032 / DSM 20300 / JCM 1318 / BCRC 11384 / CCUG 27702 / LMG 3730 / NBRC 12168 / NCIMB 10025 / NRRL B-2784 / 534).